The sequence spans 408 residues: Multidrug resistance protein MdtG (408 aa).

11 consecutive transmembrane segments (helical) span residues 16-36 (LIVA…VMPF), 58-78 (IVFS…GGLA), 92-112 (LGMG…QFLI), 115-135 (ALLG…ATQV), 146-166 (TLST…GLLA), 173-193 (PVFF…LFCI), 224-244 (LFVT…ILTL), 256-276 (VAFI…LSAP), 290-310 (ILIT…YVQT), 319-339 (FLLG…LVYN), and 378-398 (AVFL…WNSL).

The protein belongs to the major facilitator superfamily. DHA1 family. MdtG (TC 2.A.1.2.20) subfamily.

It is found in the cell inner membrane. Functionally, confers resistance to fosfomycin and deoxycholate. The polypeptide is Multidrug resistance protein MdtG (Escherichia coli O6:K15:H31 (strain 536 / UPEC)).